The primary structure comprises 258 residues: Venom plasminogen activator LV-PA (258 aa).

The first 18 residues, Met-1–Ala-18, serve as a signal peptide directing secretion. A propeptide spanning residues Gln-19 to Leu-24 is cleaved from the precursor. One can recognise a Peptidase S1 domain in the interval Val-25–Ala-249. A glycan (N-linked (GlcNAc...) asparagine) is linked at Asn-44. A disulfide bridge links Cys-50 with Cys-66. Residues His-65 and Asp-110 each act as charge relay system in the active site. 3 disulfide bridges follow: Cys-142–Cys-210, Cys-174–Cys-189, and Cys-200–Cys-225. Ser-204 acts as the Charge relay system in catalysis.

Belongs to the peptidase S1 family. Snake venom subfamily. In terms of assembly, monomer. In terms of processing, N-glycosylated. PubMed:17034951 shows that it contains approximately 10% carbohydrates, PubMed:10871053 shows that it contains approximately 20% carbohydrates. As to expression, expressed by the venom gland.

It is found in the secreted. Its activity is regulated as follows. Inhibited by the serine protease inhibitors NPGB, PMSF, p-aminobenzamidine and aprotinin. Not inhibited by soybean trypsin inhibitor or EDTA. Its function is as follows. Snake venom serine protease that activates plasminogen. Weakly hydrolyzes the alpha chain of human fibrinogen without releasing fibrinopeptide A. Does not hydrolyze plasma kallikrein or factor Xa. Does not clot fibrinogen. Does not affect platelet function. Induces hypotensive effects on rats. Shows a preferential cleavage at Lys-|-Xaa over Arg-|-Xaa bonds. The chain is Venom plasminogen activator LV-PA from Lachesis muta muta (Bushmaster).